We begin with the raw amino-acid sequence, 234 residues long: Ribitol-5-phosphate cytidylyltransferase (234 aa).

CTP-binding positions include 7-10 (LAGG) and 79-85 (GSIVQKS).

Belongs to the IspD/TarI cytidylyltransferase family. TarI subfamily.

It carries out the reaction D-ribitol 5-phosphate + CTP + H(+) = CDP-L-ribitol + diphosphate. It participates in cell wall biogenesis; poly(ribitol phosphate) teichoic acid biosynthesis. Catalyzes the transfer of the cytidylyl group of CTP to D-ribitol 5-phosphate. The protein is Ribitol-5-phosphate cytidylyltransferase of Lacticaseibacillus paracasei (strain ATCC 334 / BCRC 17002 / CCUG 31169 / CIP 107868 / KCTC 3260 / NRRL B-441) (Lactobacillus paracasei).